A 211-amino-acid polypeptide reads, in one-letter code: Leucyl/phenylalanyl-tRNA--protein transferase (211 aa).

The protein belongs to the L/F-transferase family.

The protein localises to the cytoplasm. It catalyses the reaction N-terminal L-lysyl-[protein] + L-leucyl-tRNA(Leu) = N-terminal L-leucyl-L-lysyl-[protein] + tRNA(Leu) + H(+). The catalysed reaction is N-terminal L-arginyl-[protein] + L-leucyl-tRNA(Leu) = N-terminal L-leucyl-L-arginyl-[protein] + tRNA(Leu) + H(+). The enzyme catalyses L-phenylalanyl-tRNA(Phe) + an N-terminal L-alpha-aminoacyl-[protein] = an N-terminal L-phenylalanyl-L-alpha-aminoacyl-[protein] + tRNA(Phe). Its function is as follows. Functions in the N-end rule pathway of protein degradation where it conjugates Leu, Phe and, less efficiently, Met from aminoacyl-tRNAs to the N-termini of proteins containing an N-terminal arginine or lysine. In Flavobacterium psychrophilum (strain ATCC 49511 / DSM 21280 / CIP 103535 / JIP02/86), this protein is Leucyl/phenylalanyl-tRNA--protein transferase.